A 208-amino-acid chain; its full sequence is Large ribosomal subunit protein bL25 (208 aa).

It belongs to the bacterial ribosomal protein bL25 family. CTC subfamily. In terms of assembly, part of the 50S ribosomal subunit; part of the 5S rRNA/L5/L18/L25 subcomplex. Contacts the 5S rRNA. Binds to the 5S rRNA independently of L5 and L18.

This is one of the proteins that binds to the 5S RNA in the ribosome where it forms part of the central protuberance. The polypeptide is Large ribosomal subunit protein bL25 (Bordetella pertussis (strain Tohama I / ATCC BAA-589 / NCTC 13251)).